We begin with the raw amino-acid sequence, 691 residues long: Protein-glutamine gamma-glutamyltransferase E (691 aa).

Tyrosine 110 bears the Phosphotyrosine mark. At threonine 111 the chain carries Phosphothreonine. Alanine 221, asparagine 224, asparagine 226, and aspartate 227 together coordinate Ca(2+). Residue cysteine 272 is part of the active site. Residues aspartate 301, aspartate 303, asparagine 305, serine 307, and aspartate 324 each coordinate Ca(2+). Residues histidine 330 and aspartate 353 contribute to the active site. Residues asparagine 393, threonine 414, glutamate 442, and glutamate 447 each contribute to the Ca(2+) site.

The protein belongs to the transglutaminase superfamily. Transglutaminase family. As to quaternary structure, consists of two polypeptide chains, which are synthesized as a precursor form of a single polypeptide. Requires Ca(2+) as cofactor. Post-translationally, activated by proteolytic processing. In vitro activation is commonly achieved by cleavage with dispase, a neutral bacterial protease. Physiological activation may be catalyzed by CTSL and, to a lesser extent, by CTSS.

It localises to the cytoplasm. The catalysed reaction is L-glutaminyl-[protein] + L-lysyl-[protein] = [protein]-L-lysyl-N(6)-5-L-glutamyl-[protein] + NH4(+). Its function is as follows. Catalyzes the calcium-dependent formation of isopeptide cross-links between glutamine and lysine residues in various proteins, as well as the conjugation of polyamines to proteins. Involved in the formation of the cornified envelope (CE), a specialized component consisting of covalent cross-links of proteins beneath the plasma membrane of terminally differentiated keratinocytes. Catalyzes small proline-rich proteins and LOR cross-linking to form small interchain oligomers, which are further cross-linked by TGM1 onto the growing CE scaffold. In hair follicles, involved in cross-linking structural proteins to hardening the inner root sheath. The chain is Protein-glutamine gamma-glutamyltransferase E (TGM3) from Bos taurus (Bovine).